The sequence spans 489 residues: Coiled-coil domain-containing protein 77 (489 aa).

The residue at position 38 (serine 38) is a Phosphoserine. 2 coiled-coil regions span residues 57–120 and 212–487; these read SQEL…QVCL and ERHQ…NALR.

This chain is Coiled-coil domain-containing protein 77 (Ccdc77), found in Mus musculus (Mouse).